A 329-amino-acid chain; its full sequence is MTTTTASLVKTFLFRCDSFSSFKFKCKFESPAKTRLLSPATEKHVVRSSRAWRIRCLSDDPGSSHVFVASRRKMVVLLSTVQLLSHMLPQNGNAAEIYPVMQNEIRKVVTKGKAAGVLRLVFHDAGTFELDDHSGGINGSIAYELERPENIGLKKSLKVLAKAKVKVDEIQPVSWADMISVAGSEAVSICGGPTIPVVLGRLDSAQPDPEGKLPPETLSASGLKECFKRKGFSTQELVALSGAHTIGSKGFGDPTVFDNAYYKILLEKPWTSTSKMTSMVGLPSDHALVQDDECLRWVKRYAEDQDKFFEDFTNAYIKLVNSGAKWNML.

Histidine 123 functions as the Proton acceptor in the catalytic mechanism. Position 244 (histidine 244) interacts with heme b.

Belongs to the peroxidase family. Ascorbate peroxidase subfamily. The cofactor is heme b.

It catalyses the reaction L-ascorbate + H2O2 = L-dehydroascorbate + 2 H2O. Plays a key role in hydrogen peroxide removal. The protein is Putative L-ascorbate peroxidase 6 (APX6) of Arabidopsis thaliana (Mouse-ear cress).